The following is a 352-amino-acid chain: B1 bradykinin receptor (352 aa).

The Extracellular segment spans residues 1–41; it reads MASWPPLQLQSSNQSQLFPQNATACDNAPEAWDLLHRVLPT. Residues Asn-13 and Asn-21 are each glycosylated (N-linked (GlcNAc...) asparagine). The helical transmembrane segment at 42 to 62 threads the bilayer; the sequence is FIISICSFGLLGNLFVLLVFL. At 63 to 72 the chain is on the cytoplasmic side; the sequence is LPRRRLNVAE. Residues 73–93 traverse the membrane as a helical segment; it reads IYLANLAASDLVFVLGLPFWA. Residues 94 to 110 lie on the Extracellular side of the membrane; sequence ENIWNQFNWPFGALLCR. An intrachain disulfide couples Cys-109 to Cys-188. Residues 111–131 form a helical membrane-spanning segment; that stretch reads VINGIIKANLFISIFLVVAIS. The Cytoplasmic segment spans residues 132-153; sequence QDRYCVLVHPMASRRRQRRRQA. Residues 154 to 174 traverse the membrane as a helical segment; it reads RVTCVLIWVVGGLLSIPTFLL. Residues 175 to 206 lie on the Extracellular side of the membrane; sequence RSIQAVPDLNITACILLLPHEAWHFARIVELN. N-linked (GlcNAc...) asparagine glycosylation occurs at Asn-184. Residues 207 to 227 form a helical membrane-spanning segment; the sequence is ILAFLLPLAAIIFFNYHILAS. Residues 228–250 lie on the Cytoplasmic side of the membrane; that stretch reads LRGREEVSRTRCGGSKDSKTTAL. Residues 251–271 form a helical membrane-spanning segment; it reads ILTLVVAFLVCWAPYHFFAFL. The Extracellular segment spans residues 272–294; that stretch reads EFLFQVQAVRGCFWEDFIDLGLQ. The chain crosses the membrane as a helical span at residues 295-315; sequence LANFLAFTNSSLNPVIYVFAG. The Cytoplasmic segment spans residues 316-352; that stretch reads RLFRTKVWELYKQCTPKSLAPISSSHRKEIFQLFWRN. Cys-329 is lipidated: S-palmitoyl cysteine.

It belongs to the G-protein coupled receptor 1 family. Bradykinin receptor subfamily. BDKRB1 sub-subfamily.

It localises to the cell membrane. Its function is as follows. This is a receptor for bradykinin. Could be a factor in chronic pain and inflammation. The sequence is that of B1 bradykinin receptor (BDKRB1) from Macaca fascicularis (Crab-eating macaque).